The primary structure comprises 521 residues: SET and MYND domain-containing protein DDB_G0292140 (521 aa).

The segment at 1 to 101 is disordered; the sequence is MDGVIESPSN…KIKKSKKSIK (101 aa). Residues 12–55 show a composition bias toward low complexity; sequence TIKISPSTSDSSTTTPIITTPPTQSTATVTTKAAATTTTTEAST. The segment covering 56-65 has biased composition (pro residues); the sequence is TPPPPQPTPT. Low complexity predominate over residues 66–90; the sequence is PTQSTATVTKEVETTTETIPPIVTK. Over residues 91–101 the composition is skewed to basic residues; the sequence is GKIKKSKKSIK. Positions 122–406 constitute an SET domain; sequence WPIHVYSHPI…EGDELTISYI (285 aa). Cysteine 167, cysteine 170, cysteine 188, cysteine 191, cysteine 197, cysteine 201, histidine 209, and cysteine 213 together coordinate Zn(2+). The segment at 167–213 adopts an MYND-type zinc-finger fold; sequence CQHCFLEVPLNQQILPTDFYMCEGCQRVGYCSANCRCIDYSQHRFEC. The tract at residues 442–521 is disordered; it reads QTGTLEKDDD…QDHQNNDKSN (80 aa). A compositionally biased stretch (acidic residues) spans 448 to 469; sequence KDDDDNDDEKEKMDEDDDEKDD. The span at 470–485 shows a compositional bias: basic and acidic residues; that stretch reads DINNKNDKKSKYKSDG. Positions 486-495 are enriched in acidic residues; it reads STDDEEDEDN. Residues 497 to 514 show a composition bias toward low complexity; it reads NNKNNNKNKNNNSNNQDH.

Belongs to the class V-like SAM-binding methyltransferase superfamily.

Its function is as follows. Probable methyltransferase. This Dictyostelium discoideum (Social amoeba) protein is SET and MYND domain-containing protein DDB_G0292140.